Here is a 558-residue protein sequence, read N- to C-terminus: MSLSKEVKSFQWTQALRRELQGFTSDVKAAVIKDATSLLNGLDFSEVSNVQRIMRKERRDDKDLQRLRSLNQTVHSLVDPKSTSKKNVLKVGRLSAEELMTLAADLEKLKAKIMRTERPQASGVYMGNLTAQQLDQRSQILQMVGMRRPQQGASGVVRVWDVKDSSLLNNQFGTMPSLTMACMAKQSQTPLNDVVQALTDLGLLYTVKYPNLSDLERLKDKHPVLGVITEQQSSINISGYNFSLGAAVKAGAALLHGGNMLESILIKPSNSEDLLKAVLGAKKKLNMFVSDQVGDRNPYENILYKVCLSGEGWPYIACRTSVVGRAWENTTIDLTNEKLVANSSRPVPGAAGPPQVGLSYSQTMLLKDLMGGIDPNAPTWIDIEGRFNDPVEIAIFQPQNGQFIHFYREPTDQKQFKQDSKYSHGMDLADLFNAQAGLTSSVIGALPQGMVLSCQGSDDIRKLLDSQNRRDIKLIDVEMTKEASREYEDKVWDKYGWLCKMHTGVVRDKKKKEITPHCALMDCIIFESASKARLPDLKTVHNILPHDLIFRGPNVVTL.

The segment at 54–237 (MRKERRDDKD…ITEQQSSINI (184 aa)) is binding site for the cap structure m7GTP. Asp-382 and Glu-384 together coordinate Mn(2+). 4 residues coordinate Zn(2+): Glu-392, Cys-499, His-502, and Cys-518. Asp-522 contributes to the Mn(2+) binding site.

It belongs to the arenaviridae nucleocapsid protein family. As to quaternary structure, homomultimerizes to form the nucleocapsid. Binds to viral genomic RNA. Interacts with glycoprotein G2. Interacts with protein Z; this interaction probably directs the encapsidated genome to budding sites. Interacts with protein L; this interaction does not interfere with Z-L interaction. Interacts with host IKBKE (via Protein kinase domain); the interaction inhibits IKBKE kinase activity.

It is found in the virion. The protein localises to the host cytoplasm. In terms of biological role, encapsidates the genome, protecting it from nucleases. The encapsidated genomic RNA is termed the nucleocapsid (NC). Serves as template for viral transcription and replication. The increased presence of protein N in host cell does not seem to trigger the switch from transcription to replication as observed in other negative strain RNA viruses. Through the interaction with host IKBKE, strongly inhibits the phosphorylation and nuclear translocation of host IRF3, a protein involved in interferon activation pathway, leading to the inhibition of interferon-beta and IRF3-dependent promoters activation. Also encodes a functional 3'-5' exoribonuclease that degrades preferentially dsRNA substrates and thereby participates in the suppression of interferon induction. The polypeptide is Nucleoprotein (Lymphocytic choriomeningitis virus (strain WE) (LCMV)).